The sequence spans 473 residues: Kynurenine 3-monooxygenase (473 aa).

This sequence belongs to the aromatic-ring hydroxylase family. KMO subfamily. FAD serves as cofactor.

The protein resides in the mitochondrion outer membrane. It carries out the reaction L-kynurenine + NADPH + O2 + H(+) = 3-hydroxy-L-kynurenine + NADP(+) + H2O. The protein operates within cofactor biosynthesis; NAD(+) biosynthesis; quinolinate from L-kynurenine: step 1/3. Its function is as follows. Catalyzes the hydroxylation of L-kynurenine (L-Kyn) to form 3-hydroxy-L-kynurenine (L-3OHKyn). Required for synthesis of quinolinic acid. In Debaryomyces hansenii (strain ATCC 36239 / CBS 767 / BCRC 21394 / JCM 1990 / NBRC 0083 / IGC 2968) (Yeast), this protein is Kynurenine 3-monooxygenase.